The sequence spans 231 residues: Small proline-rich protein 3 (231 aa).

Positions Met1–Pro104 are disordered. An N-acetylserine modification is found at Ser2. Tandem repeats lie at residues Glu55 to Pro62, Glu63 to Pro70, Asp71 to Pro78, Asp79 to Pro86, Glu87 to Pro94, Gly95 to Pro102, Gln103 to Pro110, Asp111 to Pro118, Glu119 to Pro126, Gly127 to Pro134, Gln135 to Pro142, Glu143 to Pro150, Gly151 to Pro158, Gln159 to Pro166, Glu167 to Pro174, Gly175 to Pro182, Gln183 to Pro190, Glu191 to Pro198, Gly199 to Pro206, Gln207 to Gln214, and Glu215 to Thr222. The 21 X 8 AA approximate tandem repeats stretch occupies residues Glu55–Thr222. Residues Ser80–Pro94 are compositionally biased toward polar residues. The interval Lys188–Lys231 is disordered. Polar residues predominate over residues Gln214–Lys231.

Belongs to the cornifin (SPRR) family. In terms of tissue distribution, suprabasal layers of the squamous epithelia of esophagus, tongue and oral mucosa.

It is found in the cytoplasm. Can serve as a substrate in transglutaminase-catalyzed cross linking reactions and can function as a cross-linked envelope precursor. The chain is Small proline-rich protein 3 (SPRR3) from Oryctolagus cuniculus (Rabbit).